Reading from the N-terminus, the 321-residue chain is Glucokinase (321 aa).

Position 8-13 (8-13 (GDVGGT)) interacts with ATP.

It belongs to the bacterial glucokinase family.

The protein localises to the cytoplasm. It carries out the reaction D-glucose + ATP = D-glucose 6-phosphate + ADP + H(+). In Tolumonas auensis (strain DSM 9187 / NBRC 110442 / TA 4), this protein is Glucokinase.